The sequence spans 405 residues: L-rhamnonate dehydratase (405 aa).

The substrate site is built by His-33 and Arg-59. Mg(2+)-binding residues include Asp-226, Glu-252, and Glu-280. The active-site Proton acceptor is His-329. Glu-349 contacts substrate.

The protein belongs to the mandelate racemase/muconate lactonizing enzyme family. RhamD subfamily. Homooctamer; tetramer of dimers. Mg(2+) serves as cofactor.

It catalyses the reaction L-rhamnonate = 2-dehydro-3-deoxy-L-rhamnonate + H2O. In terms of biological role, catalyzes the dehydration of L-rhamnonate to 2-keto-3-deoxy-L-rhamnonate (KDR). This is L-rhamnonate dehydratase from Escherichia coli O45:K1 (strain S88 / ExPEC).